A 435-amino-acid chain; its full sequence is Xylose isomerase (435 aa).

Catalysis depends on residues His99 and Asp102. 7 residues coordinate Mg(2+): Glu230, Glu266, His269, Asp294, Asp305, Asp307, and Asp337.

It belongs to the xylose isomerase family. As to quaternary structure, homotetramer. Mg(2+) is required as a cofactor.

The protein localises to the cytoplasm. The catalysed reaction is alpha-D-xylose = alpha-D-xylulofuranose. This chain is Xylose isomerase, found in Listeria welshimeri serovar 6b (strain ATCC 35897 / DSM 20650 / CCUG 15529 / CIP 8149 / NCTC 11857 / SLCC 5334 / V8).